Reading from the N-terminus, the 359-residue chain is MTIKIAIDCMGGDHGVSVTVPAAISFLSRHDDAEMVLVGLPDAIRAQLKKLHALDHPRVSIVEATEVITMDDPVEVALRKKRDSSMRVAVTQVKEGLAGACISAGNTGALMAVSRYVLKTLEGIERPAIATTIPNEQGWGTTVLDLGANADCEPEHLLQFARMAEAMVAVVDHKEHPTVGLLNIGEEVIKGNEVVKRAGELLRASELNFYGNVEGNDIFKGTTDIVVCDGFVGNVALKSTEGLAKMIGSMIKEEFTRSWFTKLLAAVAMPVLSRLARRLDPARYNGASLLGLRGLVIKSHGSADAHSFEWAIKRGYDAAKNGVIARITRAFADKSSAAGGVQSAPETEAPGAHPSPHVA.

The interval 338–359 is disordered; it reads AGGVQSAPETEAPGAHPSPHVA.

The protein belongs to the PlsX family. As to quaternary structure, homodimer. Probably interacts with PlsY.

It localises to the cytoplasm. It catalyses the reaction a fatty acyl-[ACP] + phosphate = an acyl phosphate + holo-[ACP]. The protein operates within lipid metabolism; phospholipid metabolism. Catalyzes the reversible formation of acyl-phosphate (acyl-PO(4)) from acyl-[acyl-carrier-protein] (acyl-ACP). This enzyme utilizes acyl-ACP as fatty acyl donor, but not acyl-CoA. The chain is Phosphate acyltransferase from Cupriavidus taiwanensis (strain DSM 17343 / BCRC 17206 / CCUG 44338 / CIP 107171 / LMG 19424 / R1) (Ralstonia taiwanensis (strain LMG 19424)).